The chain runs to 156 residues: Myosin regulatory light chain, striated adductor muscle (156 aa).

The residue at position 1 (Ala-1) is a Blocked amino end (Ala). 2 consecutive EF-hand domains span residues 15-50 and 84-119; these read KQIQ…LGRT and DTEE…MGDN. Ca(2+) contacts are provided by Asp-28, Asp-30, Asp-32, and Asp-39.

In terms of biological role, in molluscan muscle, calcium regulation is associated with myosin rather than with actin. Muscle myosin contains two types of light chains: the catalytic light chain, essential for ATPase activity, and the regulatory light chain, a calcium-binding protein responsible for Ca(2+) dependent binding and Ca(2+) dependent Mg-ATPase activity. The polypeptide is Myosin regulatory light chain, striated adductor muscle (Mizuhopecten yessoensis (Japanese scallop)).